The chain runs to 397 residues: Staphyloferrin A transporter (397 aa).

12 helical membrane passes run 10-30 (FLLF…VLTT), 39-59 (IVNF…GAIA), 67-87 (LLRI…VLTY), 93-110 (PISV…LSAV), 137-157 (FIIN…LAVY), 162-182 (TFLA…PLHF), 213-233 (IFIT…LLPV), 245-265 (IFGI…LVLP), 271-292 (IGMV…LGVV), 296-313 (IVIM…SQWA), 333-353 (VLSI…LMSI), and 358-378 (FGIV…TMVF).

It belongs to the major facilitator superfamily.

It is found in the cell membrane. Functionally, involved in staphyloferrin A secretion. The sequence is that of Staphyloferrin A transporter from Staphylococcus aureus (strain NCTC 8325 / PS 47).